A 414-amino-acid polypeptide reads, in one-letter code: MNTSRLFSLLFQGSLVKRIAAGLVLGIVVALISAPLQETIGFNLAEKVGVLGTIFVKALRAVAPILIFFLVMAALANRKIGTKSNMKEIIVLYLLGTFLAAFVAVIAGFVFPTEVVLATKEDASSAPQAVGQVLFTLILNVVDNPLNAIFKANFIGVLAWSIGLGLALRHASDATKNVLSDFAEGVSKIVHVIISFAPFGVFGLVAETLSDKGLVALGGYVQLLAVLIGTMLFTAFVVNPILVYWKIRRNPYPLVWTCVRESGVTAFFTRSSAANIPVNIELAKRLNLDEETYSVSIPLGANINMAGAAITITILTLAAVHTLGLEVSFVSALLLSIVAALCACGASGVAGGSLLLIPLACSLFGISDDVAAQMIGVGFIIGILQDSTETALNSSTDVLFTAAVCMEEERKNAA.

8 helical membrane-spanning segments follow: residues 22 to 42, 54 to 74, 89 to 109, 148 to 168, 189 to 209, 223 to 243, 305 to 325, and 337 to 357; these read GLVL…TIGF, IFVK…VMAA, IIVL…IAGF, AIFK…GLAL, IVHV…AETL, LLAV…PILV, MAGA…TLGL, and IVAA…LLLI.

Belongs to the dicarboxylate/amino acid:cation symporter (DAACS) (TC 2.A.23) family.

It localises to the cell inner membrane. It carries out the reaction L-serine(in) + Na(+)(in) = L-serine(out) + Na(+)(out). It catalyses the reaction L-threonine(in) + Na(+)(in) = L-threonine(out) + Na(+)(out). Involved in the import of serine and threonine into the cell, with the concomitant import of sodium (symport system). The chain is Serine/threonine transporter SstT from Haemophilus influenzae (strain 86-028NP).